We begin with the raw amino-acid sequence, 316 residues long: 4-hydroxy-3-methylbut-2-enyl diphosphate reductase (316 aa).

Residue C12 coordinates [4Fe-4S] cluster. Residues H43 and H81 each contribute to the (2E)-4-hydroxy-3-methylbut-2-enyl diphosphate site. Dimethylallyl diphosphate is bound by residues H43 and H81. H43 and H81 together coordinate isopentenyl diphosphate. C103 lines the [4Fe-4S] cluster pocket. A (2E)-4-hydroxy-3-methylbut-2-enyl diphosphate-binding site is contributed by H131. H131 contacts dimethylallyl diphosphate. H131 contacts isopentenyl diphosphate. The active-site Proton donor is the E133. T170 contributes to the (2E)-4-hydroxy-3-methylbut-2-enyl diphosphate binding site. C198 serves as a coordination point for [4Fe-4S] cluster. The (2E)-4-hydroxy-3-methylbut-2-enyl diphosphate site is built by S226, N228, and S271. Dimethylallyl diphosphate-binding residues include S226, N228, and S271. Residues S226, N228, and S271 each coordinate isopentenyl diphosphate.

This sequence belongs to the IspH family. [4Fe-4S] cluster serves as cofactor.

It carries out the reaction isopentenyl diphosphate + 2 oxidized [2Fe-2S]-[ferredoxin] + H2O = (2E)-4-hydroxy-3-methylbut-2-enyl diphosphate + 2 reduced [2Fe-2S]-[ferredoxin] + 2 H(+). It catalyses the reaction dimethylallyl diphosphate + 2 oxidized [2Fe-2S]-[ferredoxin] + H2O = (2E)-4-hydroxy-3-methylbut-2-enyl diphosphate + 2 reduced [2Fe-2S]-[ferredoxin] + 2 H(+). Its pathway is isoprenoid biosynthesis; dimethylallyl diphosphate biosynthesis; dimethylallyl diphosphate from (2E)-4-hydroxy-3-methylbutenyl diphosphate: step 1/1. It participates in isoprenoid biosynthesis; isopentenyl diphosphate biosynthesis via DXP pathway; isopentenyl diphosphate from 1-deoxy-D-xylulose 5-phosphate: step 6/6. In terms of biological role, catalyzes the conversion of 1-hydroxy-2-methyl-2-(E)-butenyl 4-diphosphate (HMBPP) into a mixture of isopentenyl diphosphate (IPP) and dimethylallyl diphosphate (DMAPP). Acts in the terminal step of the DOXP/MEP pathway for isoprenoid precursor biosynthesis. In Bacillus mycoides (strain KBAB4) (Bacillus weihenstephanensis), this protein is 4-hydroxy-3-methylbut-2-enyl diphosphate reductase.